The following is an 80-amino-acid chain: Defensin-like protein 204 (80 aa).

An N-terminal signal peptide occupies residues 1–29; that stretch reads MAKTFSSICFTTLLLVVLFISTEIPKSEA. 3 disulfide bridges follow: Cys-43-Cys-64, Cys-48-Cys-73, and Cys-52-Cys-75.

The protein belongs to the DEFL family.

It localises to the secreted. The sequence is that of Defensin-like protein 204 from Arabidopsis thaliana (Mouse-ear cress).